A 416-amino-acid chain; its full sequence is Tyrosine--tRNA ligase (416 aa).

An L-tyrosine-binding site is contributed by Y40. Positions 45–54 (ATAASLHVGH) match the 'HIGH' region motif. L-tyrosine-binding residues include Y177 and Q181. The 'KMSKS' region motif lies at 237 to 241 (KMGKS). K240 serves as a coordination point for ATP. The S4 RNA-binding domain maps to 351 to 416 (LSVTHFLVAA…RKKHKLVRLA (66 aa)).

It belongs to the class-I aminoacyl-tRNA synthetase family. TyrS type 1 subfamily. Homodimer.

Its subcellular location is the cytoplasm. It carries out the reaction tRNA(Tyr) + L-tyrosine + ATP = L-tyrosyl-tRNA(Tyr) + AMP + diphosphate + H(+). Catalyzes the attachment of tyrosine to tRNA(Tyr) in a two-step reaction: tyrosine is first activated by ATP to form Tyr-AMP and then transferred to the acceptor end of tRNA(Tyr). The protein is Tyrosine--tRNA ligase of Cereibacter sphaeroides (strain ATCC 17025 / ATH 2.4.3) (Rhodobacter sphaeroides).